We begin with the raw amino-acid sequence, 152 residues long: Superoxide dismutase [Cu-Zn] 5 (152 aa).

The Cu cation site is built by His44, His46, and His61. An intrachain disulfide couples Cys55 to Cys144. Zn(2+) contacts are provided by His61, His69, His78, and Asp81. His118 contacts Cu cation.

It belongs to the Cu-Zn superoxide dismutase family. It depends on Cu cation as a cofactor. Requires Zn(2+) as cofactor.

It carries out the reaction 2 superoxide + 2 H(+) = H2O2 + O2. Its function is as follows. Destroys radicals which are normally produced within the cells and which are toxic to biological systems. In Dictyostelium discoideum (Social amoeba), this protein is Superoxide dismutase [Cu-Zn] 5 (sodE).